The primary structure comprises 326 residues: Acyl-CoA-binding domain-containing protein 4 (326 aa).

The ACB domain maps to 10 to 99 (CQKQFQAAVS…MKLVAQKVID (90 aa)). An acyl-CoA-binding positions include 21–30 (IQNLPKNGSY), 41–45 (YSYYK), lysine 67, and tyrosine 86. Disordered regions lie at residues 147–170 (VQAA…SRLP) and 223–248 (KEAA…SLMG). Residue serine 164 is modified to Phosphoserine.

Binds medium- and long-chain acyl-CoA esters and may function as an intracellular carrier of acyl-CoA esters. The protein is Acyl-CoA-binding domain-containing protein 4 (Acbd4) of Rattus norvegicus (Rat).